A 557-amino-acid chain; its full sequence is MGQARPAARRPHSPDPGAQPAPPRRRARALALLGALLAAAAAVAAARACALLADAQAAARQESALKVLGTDGLFLFSSLDTDQDMYISPEEFKPIAEKLTGSVPVANYEEEELPHDPSEETLTIEARFQPLLMETMTKSKDGFLGVSRLALSGLRNWTTAASPSAAFAARHFRPFLPPPGQELGQPWWIIPGELSVFTGYLSNNRFYPPPPKGKEVIIHRLLSMFHPRPFVKTRFAPQGTVACLTAISDSYYTVMFRIHAEFQLSEPPDFPFWFSPGQFTGHIILSKDATHIRDFRLFVPNHRSLNVDMEWLYGASETSNMEVDIGYVPQMELEAVGPSVPSVILDEDGNMIDSRLPSGEPLQFVFEEIKWHQELSWEEAARRLEVAMYPFKKVNYLPFTEAFDRARAEKKLVHSILLWGALDDQSCUGSGRTLRETVLESPPILTLLNESFISTWSLVKELEDLQTQQENPLHRQLAGLHLEKYSFPVEMMICLPNGTVVHHINANYFLDITSMKPEDMENNNVFSFSSSFEDPSTATYMQFLREGLRRGLPLLQP.

Residues 1–24 (MGQARPAARRPHSPDPGAQPAPPR) form a disordered region. Positions 1–42 (MGQARPAARRPHSPDPGAQPAPPRRRARALALLGALLAAAAA) are cleaved as a signal peptide. Positions 67–102 (VLGTDGLFLFSSLDTDQDMYISPEEFKPIAEKLTGS) constitute an EF-hand domain. Asparagine 156 is a glycosylation site (N-linked (GlcNAc...) asparagine). A non-standard amino acid (selenocysteine) is located at residue selenocysteine 428. N-linked (GlcNAc...) asparagine glycosylation is found at asparagine 449 and asparagine 497.

In terms of assembly, interacts with RYR1, RYR2 and RYR3. In terms of processing, N-glycosylated.

Its subcellular location is the endoplasmic reticulum membrane. Functionally, plays an important role in cell protection against oxidative stress and in the regulation of redox-related calcium homeostasis. Regulates the calcium level of the ER by protecting the calcium pump ATP2A2 against the oxidoreductase ERO1A-mediated oxidative damage. Within the ER, ERO1A activity increases the concentration of H(2)O(2), which attacks the luminal thiols in ATP2A2 and thus leads to cysteinyl sulfenic acid formation (-SOH) and SEPN1 reduces the SOH back to free thiol (-SH), thus restoring ATP2A2 activity. Acts as a modulator of ryanodine receptor (RyR) activity: protects RyR from oxidation due to increased oxidative stress, or directly controls the RyR redox state, regulating the RyR-mediated calcium mobilization required for normal muscle development and differentiation. Essential for muscle regeneration and satellite cell maintenance in skeletal muscle. This is Selenoprotein N from Mus musculus (Mouse).